The primary structure comprises 450 residues: Phosphoglucosamine mutase (450 aa).

Serine 101 functions as the Phosphoserine intermediate in the catalytic mechanism. Mg(2+) is bound by residues serine 101, aspartate 240, aspartate 242, and aspartate 244. Serine 101 carries the post-translational modification Phosphoserine.

The protein belongs to the phosphohexose mutase family. The cofactor is Mg(2+). In terms of processing, activated by phosphorylation.

It carries out the reaction alpha-D-glucosamine 1-phosphate = D-glucosamine 6-phosphate. In terms of biological role, catalyzes the conversion of glucosamine-6-phosphate to glucosamine-1-phosphate. This Streptococcus pneumoniae (strain JJA) protein is Phosphoglucosamine mutase.